The following is a 228-amino-acid chain: Geranylgeranylglyceryl phosphate synthase (228 aa).

Residue Lys-11 coordinates sn-glycerol 1-phosphate. Mg(2+) contacts are provided by Asp-13 and Thr-39. Residues 159 to 164, Gly-189, and 209 to 210 each bind sn-glycerol 1-phosphate; these read YIEYSG and GN.

It belongs to the GGGP/HepGP synthase family. Group I subfamily. Requires Mg(2+) as cofactor.

The protein localises to the cytoplasm. It carries out the reaction sn-glycerol 1-phosphate + (2E,6E,10E)-geranylgeranyl diphosphate = sn-3-O-(geranylgeranyl)glycerol 1-phosphate + diphosphate. It functions in the pathway membrane lipid metabolism; glycerophospholipid metabolism. Its function is as follows. Prenyltransferase that catalyzes the transfer of the geranylgeranyl moiety of geranylgeranyl diphosphate (GGPP) to the C3 hydroxyl of sn-glycerol-1-phosphate (G1P). This reaction is the first ether-bond-formation step in the biosynthesis of archaeal membrane lipids. The protein is Geranylgeranylglyceryl phosphate synthase of Methanoregula boonei (strain DSM 21154 / JCM 14090 / 6A8).